The primary structure comprises 676 residues: Zinc finger protein 418 (676 aa).

Residues Val5 to Leu91 enclose the KRAB domain. 16 C2H2-type zinc fingers span residues His82–His105, Cys230–His252, Tyr258–His280, Tyr286–His308, Tyr314–His336, Tyr342–His364, Tyr370–His392, Tyr398–His420, Tyr426–His448, Tyr454–His476, Tyr482–His504, Phe510–His532, Tyr538–His560, Tyr591–His613, Tyr619–His641, and Tyr647–His669.

The protein belongs to the krueppel C2H2-type zinc-finger protein family. As to expression, highly expressed in heart.

It is found in the nucleus. Functionally, transcriptional repressor. May play a role as regulator of the ubiquitin-proteasome system and autophagy-lysosomal pathway. The chain is Zinc finger protein 418 (ZNF418) from Homo sapiens (Human).